The sequence spans 227 residues: 2,3-bisphosphoglycerate-dependent phosphoglycerate mutase (227 aa).

Residues 7–14 (RHGLSEWN), 20–21 (TG), Arg59, 86–89 (ERHY), Lys97, 113–114 (RR), and 182–183 (GN) contribute to the substrate site. His8 (tele-phosphohistidine intermediate) is an active-site residue. The active-site Proton donor/acceptor is the Glu86.

Belongs to the phosphoglycerate mutase family. BPG-dependent PGAM subfamily. Homodimer.

It catalyses the reaction (2R)-2-phosphoglycerate = (2R)-3-phosphoglycerate. It functions in the pathway carbohydrate degradation; glycolysis; pyruvate from D-glyceraldehyde 3-phosphate: step 3/5. In terms of biological role, catalyzes the interconversion of 2-phosphoglycerate and 3-phosphoglycerate. The protein is 2,3-bisphosphoglycerate-dependent phosphoglycerate mutase of Actinobacillus succinogenes (strain ATCC 55618 / DSM 22257 / CCUG 43843 / 130Z).